Consider the following 426-residue polypeptide: Serine--tRNA ligase (426 aa).

Position 231-233 (231-233 (TAE)) interacts with L-serine. 262–264 (RSE) provides a ligand contact to ATP. Glu-285 is an L-serine binding site. Residue 349 to 352 (EISS) participates in ATP binding. Ser-385 serves as a coordination point for L-serine.

It belongs to the class-II aminoacyl-tRNA synthetase family. Type-1 seryl-tRNA synthetase subfamily. As to quaternary structure, homodimer. The tRNA molecule binds across the dimer.

It localises to the cytoplasm. The catalysed reaction is tRNA(Ser) + L-serine + ATP = L-seryl-tRNA(Ser) + AMP + diphosphate + H(+). It carries out the reaction tRNA(Sec) + L-serine + ATP = L-seryl-tRNA(Sec) + AMP + diphosphate + H(+). The protein operates within aminoacyl-tRNA biosynthesis; selenocysteinyl-tRNA(Sec) biosynthesis; L-seryl-tRNA(Sec) from L-serine and tRNA(Sec): step 1/1. Functionally, catalyzes the attachment of serine to tRNA(Ser). Is also able to aminoacylate tRNA(Sec) with serine, to form the misacylated tRNA L-seryl-tRNA(Sec), which will be further converted into selenocysteinyl-tRNA(Sec). The protein is Serine--tRNA ligase of Teredinibacter turnerae (strain ATCC 39867 / T7901).